We begin with the raw amino-acid sequence, 100 residues long: Urease subunit gamma (100 aa).

The protein belongs to the urease gamma subunit family. In terms of assembly, heterotrimer of UreA (gamma), UreB (beta) and UreC (alpha) subunits. Three heterotrimers associate to form the active enzyme.

The protein resides in the cytoplasm. It carries out the reaction urea + 2 H2O + H(+) = hydrogencarbonate + 2 NH4(+). Its pathway is nitrogen metabolism; urea degradation; CO(2) and NH(3) from urea (urease route): step 1/1. This chain is Urease subunit gamma, found in Aliivibrio fischeri (strain ATCC 700601 / ES114) (Vibrio fischeri).